Reading from the N-terminus, the 312-residue chain is Urease accessory protein 7 (312 aa).

The interval 28–86 (QEATGTDSHHAHHHHTPSGASSAISHTHDNMPHDHGQFHDHGPGLWTPEEHGHTHEHLE) is disordered. Residues 36–87 (HHAHHHHTPSGASSAISHTHDNMPHDHGQFHDHGPGLWTPEEHGHTHEHLEH) form a histine rich nickel-binding domain region. Residues 53-86 (HTHDNMPHDHGQFHDHGPGLWTPEEHGHTHEHLE) are compositionally biased toward basic and acidic residues. The GTP binding P-loop motif lies at 115–122 (GPVGSGKT). The Switch domain 1 motif lies at 147–154 (TREDQEFL). Positions 171–172 (GG) match the switch domain 2 motif.

It belongs to the SIMIBI class G3E GTPase family. UreG subfamily. In terms of assembly, URE4, URE6 and URE7 may form a complex that acts as a GTP-hydrolysis-dependent molecular chaperone, activating the urease apoprotein URE1.

Urease accessory protein that binds 2 nickel atoms likely via its conserved histidine-rich domain and supplies nickel for the functional urease URE1. Has probably a dual function as a nickel chaperone and GTPase. Plays a role in host brain invasion. This is Urease accessory protein 7 from Cryptococcus neoformans var. grubii serotype A (strain H99 / ATCC 208821 / CBS 10515 / FGSC 9487) (Filobasidiella neoformans var. grubii).